The following is a 162-amino-acid chain: Interleukin-15 (162 aa).

A signal peptide spans 1-29 (MRISKPSLRSTSIQCYLCFLLNSHLITEA). A propeptide spanning residues 30-48 (GIHVFVWGCISAGLPKTEA) is cleaved from the precursor. 2 disulfides stabilise this stretch: C83/C133 and C90/C136. N-linked (GlcNAc...) asparagine glycosylation is found at N119 and N127.

Belongs to the IL-15/IL-21 family.

It is found in the secreted. Cytokine that plays a major role in the development of inflammatory and protective immune responses to microbial invaders and parasites by modulating immune cells of both the innate and adaptive immune systems. Stimulates the proliferation of natural killer cells, T-cells and B-cells and promotes the secretion of several cytokines. In monocytes, induces the production of IL8 and monocyte chemotactic protein 1/CCL2, two chemokines that attract neutrophils and monocytes respectively to sites of infection. Unlike most cytokines, which are secreted in soluble form, IL15 is expressed in association with its high affinity IL15RA on the surface of IL15-producing cells and delivers signals to target cells that express IL2RB and IL2RG receptor subunits. Binding to its receptor triggers the phosphorylation of JAK1 and JAK3 and the recruitment and subsequent phosphorylation of signal transducer and activator of transcription-3/STAT3 and STAT5. In mast cells, induces the rapid tyrosine phosphorylation of STAT6 and thereby controls mast cell survival and release of cytokines such as IL4. The protein is Interleukin-15 (IL15) of Cavia porcellus (Guinea pig).